The following is a 427-amino-acid chain: Probable WRKY transcription factor 35 (427 aa).

2 disordered regions span residues 1–45 and 266–336; these read MDNF…DLHV and YTSE…HPPF. Residues 23 to 40 show a composition bias toward pro residues; the sequence is SPGPPEGPSPSSMSPPPT. The segment at residues 209 to 275 is a DNA-binding region (WRKY); sequence SGEVVPSDLW…YTSEHNHPWP (67 aa). Over residues 284-310 the composition is skewed to low complexity; sequence STRSSSSSSLNPSSKSSTAAATTSPSS. The span at 311–333 shows a compositional bias: polar residues; it reads RVFQNNSSKDEPNNSNLPSSSTH.

This sequence belongs to the WRKY group II-e family.

The protein resides in the nucleus. Functionally, transcription factor. Interacts specifically with the W box (5'-(T)TGAC[CT]-3'), a frequently occurring elicitor-responsive cis-acting element. This Arabidopsis thaliana (Mouse-ear cress) protein is Probable WRKY transcription factor 35 (WRKY35).